Reading from the N-terminus, the 319-residue chain is Acetyl-coenzyme A carboxylase carboxyl transferase subunit alpha (319 aa).

The 262-residue stretch at 35–296 (NLDEEVQRLR…KAQLLADLSD (262 aa)) folds into the CoA carboxyltransferase C-terminal domain.

It belongs to the AccA family. In terms of assembly, acetyl-CoA carboxylase is a heterohexamer composed of biotin carboxyl carrier protein (AccB), biotin carboxylase (AccC) and two subunits each of ACCase subunit alpha (AccA) and ACCase subunit beta (AccD).

It localises to the cytoplasm. It catalyses the reaction N(6)-carboxybiotinyl-L-lysyl-[protein] + acetyl-CoA = N(6)-biotinyl-L-lysyl-[protein] + malonyl-CoA. The protein operates within lipid metabolism; malonyl-CoA biosynthesis; malonyl-CoA from acetyl-CoA: step 1/1. In terms of biological role, component of the acetyl coenzyme A carboxylase (ACC) complex. First, biotin carboxylase catalyzes the carboxylation of biotin on its carrier protein (BCCP) and then the CO(2) group is transferred by the carboxyltransferase to acetyl-CoA to form malonyl-CoA. This chain is Acetyl-coenzyme A carboxylase carboxyl transferase subunit alpha, found in Yersinia enterocolitica serotype O:8 / biotype 1B (strain NCTC 13174 / 8081).